The primary structure comprises 454 residues: uncharacterized protein (454 aa).

The N-terminal stretch at 1–21 is a signal peptide; that stretch reads MKYKTVKSIPLFLLGSIVFTA. Residue Cys22 is the site of N-palmitoyl cysteine attachment. Residue Cys22 is the site of S-diacylglycerol cysteine attachment. Residues 55–64 show a composition bias toward low complexity; it reads ASSSSSTTTS. The interval 55 to 87 is disordered; the sequence is ASSSSSTTTSNDDNNQKGYFLETNRSTGTYDPN. A compositionally biased stretch (polar residues) spans 65-87; the sequence is NDDNNQKGYFLETNRSTGTYDPN.

The protein resides in the cell membrane. This is an uncharacterized protein from Mycoplasma pneumoniae (strain ATCC 29342 / M129 / Subtype 1) (Mycoplasmoides pneumoniae).